We begin with the raw amino-acid sequence, 447 residues long: N-succinylarginine dihydrolase (447 aa).

Substrate contacts are provided by residues 19 to 28 (AGLSFGNEAS), Asn-110, and 137 to 138 (HR). Residue Glu-174 is part of the active site. Position 212 (Arg-212) interacts with substrate. The active site involves His-248. 2 residues coordinate substrate: Asp-250 and Asn-359. The active-site Nucleophile is the Cys-365.

It belongs to the succinylarginine dihydrolase family. In terms of assembly, homodimer.

The catalysed reaction is N(2)-succinyl-L-arginine + 2 H2O + 2 H(+) = N(2)-succinyl-L-ornithine + 2 NH4(+) + CO2. It participates in amino-acid degradation; L-arginine degradation via AST pathway; L-glutamate and succinate from L-arginine: step 2/5. Functionally, catalyzes the hydrolysis of N(2)-succinylarginine into N(2)-succinylornithine, ammonia and CO(2). This is N-succinylarginine dihydrolase from Escherichia coli (strain SMS-3-5 / SECEC).